We begin with the raw amino-acid sequence, 548 residues long: Chaperonin GroEL (548 aa).

ATP is bound by residues 30-33 (TLGP), K51, 87-91 (DGTTT), G415, and D495.

Belongs to the chaperonin (HSP60) family. In terms of assembly, forms a cylinder of 14 subunits composed of two heptameric rings stacked back-to-back. Interacts with the co-chaperonin GroES.

The protein localises to the cytoplasm. The catalysed reaction is ATP + H2O + a folded polypeptide = ADP + phosphate + an unfolded polypeptide.. Functionally, together with its co-chaperonin GroES, plays an essential role in assisting protein folding. The GroEL-GroES system forms a nano-cage that allows encapsulation of the non-native substrate proteins and provides a physical environment optimized to promote and accelerate protein folding. This is Chaperonin GroEL from Yersinia pseudotuberculosis serotype O:1b (strain IP 31758).